Consider the following 558-residue polypeptide: Polypeptide N-acetylgalactosaminyltransferase 16 (558 aa).

The Cytoplasmic portion of the chain corresponds to Met-1–Ala-6. A helical; Signal-anchor for type II membrane protein transmembrane segment spans residues Asn-7–Gln-26. At Asp-27–Thr-558 the chain is on the lumenal side. Low complexity predominate over residues Ser-34 to Arg-46. Residues Ser-34–Asp-53 form a disordered region. 5 disulfide bridges follow: Cys-113-Cys-340, Cys-331-Cys-409, Cys-441-Cys-460, Cys-486-Cys-506, and Cys-530-Cys-543. Residues Leu-122–Arg-227 are catalytic subdomain A. Substrate contacts are provided by Asp-163 and Arg-188. Mn(2+) is bound at residue Asp-211. Position 212 (Ser-212) interacts with substrate. His-213 lines the Mn(2+) pocket. Positions Pro-286–Arg-348 are catalytic subdomain B. A substrate-binding site is contributed by Trp-317. His-345 is a Mn(2+) binding site. Substrate contacts are provided by Arg-348, His-351, and Tyr-353. A Ricin B-type lectin domain is found at Lys-428–Leu-555.

Belongs to the glycosyltransferase 2 family. GalNAc-T subfamily. It depends on Mn(2+) as a cofactor. In the CNS, it is predominantly expressed in several distinct hypothalamic, thalamic and amygdaloid nuclei. The most abundant level of expression is in the paraventricular, ventromedial and arcuate nuclei of the hypothalamus, the anterodorsal and parafascicular nuclei of the thalamus and the central, basomedial and medial nuclei of the amygdala. Also expressed in cerebral cortex, lateral septum, habenula and hippocampus.

The protein resides in the golgi apparatus membrane. It catalyses the reaction L-seryl-[protein] + UDP-N-acetyl-alpha-D-galactosamine = a 3-O-[N-acetyl-alpha-D-galactosaminyl]-L-seryl-[protein] + UDP + H(+). The enzyme catalyses L-threonyl-[protein] + UDP-N-acetyl-alpha-D-galactosamine = a 3-O-[N-acetyl-alpha-D-galactosaminyl]-L-threonyl-[protein] + UDP + H(+). The protein operates within protein modification; protein glycosylation. Its function is as follows. Catalyzes the initial reaction in O-linked oligosaccharide biosynthesis, the transfer of an N-acetyl-D-galactosamine residue to a serine or threonine residue on the protein receptor. The protein is Polypeptide N-acetylgalactosaminyltransferase 16 (Galnt16) of Mus musculus (Mouse).